The sequence spans 115 residues: T cell receptor delta variable 1 (115 aa).

The signal sequence occupies residues 1 to 21 (MLFSSLLCVFVAFSYSGSSVA). The Ig-like domain occupies 22–115 (QKVTQAQSSV…SAKYFCALGE (94 aa)). Residues cysteine 43 and cysteine 111 are joined by a disulfide bond.

Gamma-delta TR is a heterodimer composed of a gamma and delta chain; disulfide-linked. The gamma-delta TR is associated with the transmembrane signaling CD3 coreceptor proteins following the stoichiometry: a single gamma-delta TR heterodimer associates with one CD3D-CD3E heterodimer, one CD3G-CD3E heterodimer and one CD247 homodimer forming a stable octameric structure. Upon activation, gamma-delta TR complex associates with FCER1G to initiate intracellular signaling.

It is found in the cell membrane. Its function is as follows. V region of the variable domain of T cell receptor (TR) delta chain that participates in the antigen recognition. Gamma-delta TRs recognize a variety of self and foreign non-peptide antigens frequently expressed at the epithelial boundaries between the host and external environment, including endogenous lipids presented by MH-like protein CD1D and phosphoantigens presented by butyrophilin-like molecule BTN3A1. Upon antigen recognition induces rapid, innate-like immune responses involved in pathogen clearance and tissue repair. Binding of gamma-delta TR complex to antigen triggers phosphorylation of immunoreceptor tyrosine-based activation motifs (ITAMs) in the CD3 chains by the LCK and FYN kinases, allowing the recruitment, phosphorylation, and activation of ZAP70 that facilitates phosphorylation of the scaffolding proteins LCP2 and LAT. This lead to the formation of a supramolecular signalosome that recruits the phospholipase PLCG1, resulting in calcium mobilization and ERK activation, ultimately leading to T cell expansion and differentiation into effector cells. Gamma-delta TRs are produced through somatic rearrangement of a limited repertoire of variable (V), diversity (D), and joining (J) genes. The potential diversity of gamma-delta TRs is conferred by the unique ability to rearrange (D) genes in tandem and to utilize all three reading frames. The combinatorial diversity is considerably increased by the sequence exonuclease trimming and random nucleotide (N) region additions which occur during the V-(D)-J rearrangements. The protein is T cell receptor delta variable 1 of Homo sapiens (Human).